We begin with the raw amino-acid sequence, 143 residues long: Flagellar assembly factor FliW (143 aa).

This sequence belongs to the FliW family. As to quaternary structure, interacts with flagellin in a 1:1 complex. Two molecules interact with each CsrA dimer; cannot interact with both flagellin and CsrA simultaneously. Has a higher affinity for CsrA than for flagellin. Interacts directly with flagellin (hag), forms a 3-way complex of Hag, FliS and FliW in which Flis and FliW do not directly interact. Interaction with Hag may occur via the C-terminus of Hag.

It is found in the cytoplasm. Its function is as follows. Acts as an anti-CsrA protein, binds CsrA and prevents it from repressing translation of its target genes, one of which is flagellin. Binds to flagellin (hag), which is implicated in polymerization, and participates in the assembly of the flagellum. An antagonist to translational regulator CsrA, it binds CsrA at an allosteric site and non-competitively inhibits CsrA binding to hag RNA. Partner switching by flagellin between FliW and CsrA provides a flagellar assembly checkpoint to tightly control the timing of flagellin synthesis. Flagellin binds to assembly factor FliW, freeing translation regulator CsrA to repress translation of the flagellin mRNA. When the flagellar hook is assembled flagellin is secreted, depleting intracellular flagellin, which frees FliW to interact with CsrA and inhibits CsrA binding to mRNA. This derepresses flagellin translation and provides protein for flagellar assembly. Once the flagellar filament is completed cytoplasmic flagellin levels rise and CsrA translation repression of flagellin reinitiates. Binds to CsrA and displaces it from hag mRNA. Binds to hag mRNA itself, but only at much higher concentrations than those required to displace CsrA. This is Flagellar assembly factor FliW from Bacillus subtilis (strain 168).